The following is a 393-amino-acid chain: 8-amino-7-oxononanoate synthase (393 aa).

Arg18 serves as a coordination point for substrate. Residue 105–106 (GY) coordinates pyridoxal 5'-phosphate. His130 provides a ligand contact to substrate. Ser178, His206, and Thr234 together coordinate pyridoxal 5'-phosphate. The residue at position 237 (Lys237) is an N6-(pyridoxal phosphate)lysine. Position 353 (Thr353) interacts with substrate.

This sequence belongs to the class-II pyridoxal-phosphate-dependent aminotransferase family. BioF subfamily. As to quaternary structure, homodimer. Pyridoxal 5'-phosphate serves as cofactor.

It catalyses the reaction 6-carboxyhexanoyl-[ACP] + L-alanine + H(+) = (8S)-8-amino-7-oxononanoate + holo-[ACP] + CO2. It functions in the pathway cofactor biosynthesis; biotin biosynthesis. Its function is as follows. Catalyzes the decarboxylative condensation of pimeloyl-[acyl-carrier protein] and L-alanine to produce 8-amino-7-oxononanoate (AON), [acyl-carrier protein], and carbon dioxide. The chain is 8-amino-7-oxononanoate synthase from Geotalea daltonii (strain DSM 22248 / JCM 15807 / FRC-32) (Geobacter daltonii).